Reading from the N-terminus, the 218-residue chain is Glutathione S-transferase A (218 aa).

An N-acetylserine modification is found at Ser1. One can recognise a GST N-terminal domain in the interval 2 to 82 (GKPVLHYFNV…YIATKYNLYG (81 aa)). Lys3 carries the post-translational modification N6-succinyllysine. Residues Tyr8, Lys44, 53-54 (QV), and 66-67 (QS) each bind glutathione. Residues 84-206 (DTKERLLIDM…LQPGSQRKPF (123 aa)) enclose the GST C-terminal domain.

Belongs to the GST superfamily. Alpha family. In terms of assembly, homodimer or heterodimer of GSTA1 and GSTA2.

The protein localises to the cytoplasm. The enzyme catalyses RX + glutathione = an S-substituted glutathione + a halide anion + H(+). It carries out the reaction prostaglandin A2 + glutathione = prostaglandin A2-S-(R)-glutathione. The catalysed reaction is prostaglandin J2 + glutathione = prostaglandin J2-S-(R)-glutathione. It catalyses the reaction (13S)-hydroperoxy-(9Z,11E)-octadecadienoate + 2 glutathione = (13S)-hydroxy-(9Z,11E)-octadecadienoate + glutathione disulfide + H2O. The enzyme catalyses androst-5-ene-3,17-dione = androst-4-ene-3,17-dione. Functionally, glutathione S-transferase that catalyzes the nucleophilic attack of the sulfur atom of glutathione on the electrophilic groups of a wide range of exogenous and endogenous compounds. Involved in the formation of glutathione conjugates of both prostaglandin A2 (PGA2) and prostaglandin J2 (PGJ2). It also catalyzes the isomerization of D5-androstene-3,17-dione (AD) into D4-androstene-3,17-dione and may therefore play an important role in hormone biosynthesis. Through its glutathione-dependent peroxidase activity toward the fatty acid hydroperoxide (13S)-hydroperoxy-(9Z,11E)-octadecadienoate/13-HPODE it is also involved in the metabolism of oxidized linoleic acid. The polypeptide is Glutathione S-transferase A (Cavia porcellus (Guinea pig)).